The sequence spans 445 residues: Phosphoglucosamine mutase (445 aa).

Catalysis depends on serine 102, which acts as the Phosphoserine intermediate. Mg(2+) is bound by residues serine 102, aspartate 241, aspartate 243, and aspartate 245. Serine 102 is modified (phosphoserine).

Belongs to the phosphohexose mutase family. Requires Mg(2+) as cofactor. Post-translationally, activated by phosphorylation.

The enzyme catalyses alpha-D-glucosamine 1-phosphate = D-glucosamine 6-phosphate. Functionally, catalyzes the conversion of glucosamine-6-phosphate to glucosamine-1-phosphate. This Aliivibrio fischeri (strain ATCC 700601 / ES114) (Vibrio fischeri) protein is Phosphoglucosamine mutase.